We begin with the raw amino-acid sequence, 187 residues long: Adenylate kinase (187 aa).

10–15 provides a ligand contact to ATP; sequence GSGKGT. An NMP region spans residues 30–59; the sequence is STGDMLRAEIAAGTELGKQAKTVMDAGNLV. AMP is bound by residues Thr-31, Arg-36, 57–59, 85–88, and Gln-92; these read NLV and GYPR. The LID stretch occupies residues 126-136; it reads GRAKEQGRADD. Arg-127 is a binding site for ATP. Positions 133 and 144 each coordinate AMP. Residue Gly-172 coordinates ATP.

This sequence belongs to the adenylate kinase family. As to quaternary structure, monomer.

The protein localises to the cytoplasm. The catalysed reaction is AMP + ATP = 2 ADP. The protein operates within purine metabolism; AMP biosynthesis via salvage pathway; AMP from ADP: step 1/1. Catalyzes the reversible transfer of the terminal phosphate group between ATP and AMP. Plays an important role in cellular energy homeostasis and in adenine nucleotide metabolism. The protein is Adenylate kinase of Stenotrophomonas maltophilia (strain K279a).